Reading from the N-terminus, the 313-residue chain is Cytochrome c biogenesis protein CcsA (313 aa).

A run of 8 helical transmembrane segments spans residues 9–29, 44–64, 71–91, 101–121, 143–163, 217–237, 244–264, and 278–298; these read ILTHISFSIVSIVITIHLITL, GIIVTFFCITGLLVTRWISSG, LYESLIFLSWSFSLIHIIPYF, IIGPSAIFTQGFATSGILTEI, MILGYAALLCGSLLSVALLVI, VISLGFTFLTIGILSGAVWAN, WNWDPKETWAFITWIVFAIYL, and AIVASIGFLIIWICYFGVNLL.

This sequence belongs to the CcmF/CycK/Ccl1/NrfE/CcsA family. May interact with Ccs1.

It localises to the plastid. Its subcellular location is the chloroplast thylakoid membrane. Required during biogenesis of c-type cytochromes (cytochrome c6 and cytochrome f) at the step of heme attachment. The sequence is that of Cytochrome c biogenesis protein CcsA from Nicotiana tomentosiformis (Tobacco).